Consider the following 508-residue polypeptide: Metalloprotease TIKI1 (508 aa).

Residues 1–23 (MVIIWNIFLPAFLLVLAKASLRS) form the signal peptide. Topologically, residues 24-485 (SRDSANCKLN…KYIKAAQSVS (462 aa)) are extracellular. 4 N-linked (GlcNAc...) asparagine glycosylation sites follow: Asn219, Asn228, Asn277, and Asn335. Residues 486-506 (FSLSIPSAFLLLAWCFQQVAV) traverse the membrane as a helical segment. Topologically, residues 507–508 (LQ) are cytoplasmic.

It belongs to the TIKI family. The cofactor is Mn(2+). Requires Co(2+) as cofactor. As to expression, zygotically expressed in the Spemann-Mangold organizer, in particular in the head Spemann-Mangold organizer region responsible for anterior patterning.

It is found in the cell membrane. Functionally, metalloprotease that acts as a negative regulator of the Wnt signaling pathway: expressed in the Spemann-Mangold organizer and is required for anterior-neural patterning in head formation in embryos. Acts by mediating the cleavage of the N-terminal residues of a subset of Wnt proteins. Following cleavage, Wnt proteins become oxidized and form large disulfide-bond oligomers, leading to their inactivation. Able to cleave wnt8. In Xenopus tropicalis (Western clawed frog), this protein is Metalloprotease TIKI1 (trabd2a).